The chain runs to 379 residues: Cytochrome b (379 aa).

4 helical membrane-spanning segments follow: residues 33 to 53 (FGSLLGMCLVIQILTGLFLAM), 77 to 98 (WLIRYLHANGASMFFICLFIHV), 113 to 133 (WNIGIILLLTTMATAFVGYVL), and 178 to 198 (FFAFHFILPFIIAAFALVHLL). Residues H83 and H97 each contribute to the heme b site. Residues H182 and H196 each coordinate heme b. H201 is a binding site for a ubiquinone. 4 helical membrane-spanning segments follow: residues 226–246 (TKDLLGIFLLLLVLMILALFF), 288–308 (LGGVLALVLSILILAAFPLLN), 320–340 (VTQVIYWIFIANLLVLTWIGG), and 347–367 (FTTIGQIASVTYFATIIILIP).

It belongs to the cytochrome b family. As to quaternary structure, the cytochrome bc1 complex contains 11 subunits: 3 respiratory subunits (MT-CYB, CYC1 and UQCRFS1), 2 core proteins (UQCRC1 and UQCRC2) and 6 low-molecular weight proteins (UQCRH/QCR6, UQCRB/QCR7, UQCRQ/QCR8, UQCR10/QCR9, UQCR11/QCR10 and a cleavage product of UQCRFS1). This cytochrome bc1 complex then forms a dimer. Heme b serves as cofactor.

It is found in the mitochondrion inner membrane. Component of the ubiquinol-cytochrome c reductase complex (complex III or cytochrome b-c1 complex) that is part of the mitochondrial respiratory chain. The b-c1 complex mediates electron transfer from ubiquinol to cytochrome c. Contributes to the generation of a proton gradient across the mitochondrial membrane that is then used for ATP synthesis. In Akodon montensis (Montane grass mouse), this protein is Cytochrome b (MT-CYB).